A 473-amino-acid polypeptide reads, in one-letter code: MAIKTYQAGVKEYRQTYWQPDYVPLDTDILACFKITPQSGVDREEAAAAVAAESSCGTWTTVWTDLLTDLDYYKGRAYRIEDVPGDDARFYAFVAYPIDLFEEGSVVNVFTSLVGNVFGFKAIRALRLEDVRFPIAYVKTCGGPPSGIQVERDKMNKYGRPLLGCTIKPKLGLSAKNYGRAVYECLRGSLDFTKDDENINSQPFMRWRDRFEFVQEATLKAEAETGERKGHYLNVTAPTPEEMYKRAEFAKEIGAPIIMHDYLAGGLCANAGLANWCRNNGMLLHVHRAMHAVLDRNPHHGIHFRVLTKILRLSGGDHLHTGTVVGKLEGDRASTLGWIDLLRESFVPEDRSRGIFFDQDWGSMPGAFAVASGGIHVWHMPALVAIFGDDSVLQFGGGTLGHPWGNAAGAHANRVALEACVQARNEGRQIEKEGREILTAAAQHSPELKIAMETWKEIKFEFDTVDKLDIAHK.

Substrate is bound by residues asparagine 116 and threonine 166. Residue lysine 168 is the Proton acceptor of the active site. Residue lysine 170 participates in substrate binding. Mg(2+) contacts are provided by lysine 194, aspartate 196, and glutamate 197. Lysine 194 bears the N6-carboxylysine mark. Catalysis depends on histidine 287, which acts as the Proton acceptor. Substrate contacts are provided by arginine 288, histidine 320, and serine 372.

The protein belongs to the RuBisCO large chain family. Type I subfamily. In terms of assembly, heterohexadecamer of 8 large chains and 8 small chains. The cofactor is Mg(2+).

It catalyses the reaction 2 (2R)-3-phosphoglycerate + 2 H(+) = D-ribulose 1,5-bisphosphate + CO2 + H2O. It carries out the reaction D-ribulose 1,5-bisphosphate + O2 = 2-phosphoglycolate + (2R)-3-phosphoglycerate + 2 H(+). Functionally, ruBisCO catalyzes two reactions: the carboxylation of D-ribulose 1,5-bisphosphate, the primary event in carbon dioxide fixation, as well as the oxidative fragmentation of the pentose substrate. Both reactions occur simultaneously and in competition at the same active site. The polypeptide is Ribulose bisphosphate carboxylase large chain (Nitrosomonas eutropha (strain DSM 101675 / C91 / Nm57)).